A 315-amino-acid polypeptide reads, in one-letter code: Endolytic peptidoglycan transglycosylase RlpA (315 aa).

The N-terminal stretch at 1–19 (MGLALEKVCFLGVIFLISA) is a signal peptide. A lipid anchor (N-palmitoyl cysteine) is attached at C20. A lipid anchor (S-diacylglycerol cysteine) is attached at C20. Residues 68-79 (SDSQDSNTKDQP) show a composition bias toward basic and acidic residues. Positions 68–92 (SDSQDSNTKDQPLDNGMRDSSSIQR) are disordered. One can recognise an SPOR domain in the interval 242-315 (SVSGGKFSLQ…YNQNAVLTRE (74 aa)).

This sequence belongs to the RlpA family.

It localises to the cell membrane. In terms of biological role, lytic transglycosylase with a strong preference for naked glycan strands that lack stem peptides. The chain is Endolytic peptidoglycan transglycosylase RlpA from Helicobacter pylori (strain ATCC 700392 / 26695) (Campylobacter pylori).